A 117-amino-acid polypeptide reads, in one-letter code: Putative membrane protein insertion efficiency factor (117 aa).

The segment at arginine 87 to alanine 117 is disordered.

The protein belongs to the UPF0161 family.

Its subcellular location is the cell membrane. In terms of biological role, could be involved in insertion of integral membrane proteins into the membrane. The protein is Putative membrane protein insertion efficiency factor of Streptomyces avermitilis (strain ATCC 31267 / DSM 46492 / JCM 5070 / NBRC 14893 / NCIMB 12804 / NRRL 8165 / MA-4680).